The following is an 818-amino-acid chain: Glycerol-3-phosphate acyltransferase (818 aa).

Positions 308 to 313 (CHRSHM) match the HXXXXD motif motif.

It belongs to the GPAT/DAPAT family.

It is found in the cell inner membrane. The catalysed reaction is sn-glycerol 3-phosphate + an acyl-CoA = a 1-acyl-sn-glycero-3-phosphate + CoA. The protein operates within phospholipid metabolism; CDP-diacylglycerol biosynthesis; CDP-diacylglycerol from sn-glycerol 3-phosphate: step 1/3. In Alteromonas mediterranea (strain DSM 17117 / CIP 110805 / LMG 28347 / Deep ecotype), this protein is Glycerol-3-phosphate acyltransferase.